A 197-amino-acid polypeptide reads, in one-letter code: Nucleoid occlusion factor SlmA (197 aa).

Residues 7–67 enclose the HTH tetR-type domain; sequence INRREHILQC…GLIEFIEESL (61 aa). Residues 30–49 constitute a DNA-binding region (H-T-H motif); sequence TTAKLASEVGVSEAALYRHF.

Belongs to the nucleoid occlusion factor SlmA family. Homodimer. Interacts with FtsZ.

Its subcellular location is the cytoplasm. The protein resides in the nucleoid. In terms of biological role, required for nucleoid occlusion (NO) phenomenon, which prevents Z-ring formation and cell division over the nucleoid. Acts as a DNA-associated cell division inhibitor that binds simultaneously chromosomal DNA and FtsZ, and disrupts the assembly of FtsZ polymers. SlmA-DNA-binding sequences (SBS) are dispersed on non-Ter regions of the chromosome, preventing FtsZ polymerization at these regions. The chain is Nucleoid occlusion factor SlmA from Shewanella sp. (strain MR-7).